The chain runs to 103 residues: UPF0473 protein LCA_0390 (103 aa).

It belongs to the UPF0473 family.

The sequence is that of UPF0473 protein LCA_0390 from Latilactobacillus sakei subsp. sakei (strain 23K) (Lactobacillus sakei subsp. sakei).